Consider the following 400-residue polypeptide: Glycine betaine/proline betaine transport system ATP-binding protein ProV (400 aa).

Positions 29–265 (LSKEQILEKT…PANDYVRTFF (237 aa)) constitute an ABC transporter domain. Residue 61-68 (GLSGSGKS) coordinates ATP. 2 CBS domains span residues 280–341 (ARRS…GIEA) and 343–400 (LIDD…GNNG).

It belongs to the ABC transporter superfamily. The complex is composed of two ATP-binding proteins (ProV), two transmembrane proteins (ProW) and a solute-binding protein (ProX).

The protein localises to the cell inner membrane. Its function is as follows. Part of the ProU ABC transporter complex involved in glycine betaine and proline betaine uptake. Probably responsible for energy coupling to the transport system. The chain is Glycine betaine/proline betaine transport system ATP-binding protein ProV from Salmonella typhimurium (strain LT2 / SGSC1412 / ATCC 700720).